A 146-amino-acid polypeptide reads, in one-letter code: GFLSAEEKGLVNGLWSKVNVDEVGGEALGRLLVVYPWTQRFFQSFGDLSSADAIMSNAKVKAHGKKVLNSFSDGLKNIDDLKGAFAKLSELHCDKLHVDPENFRLLGNVLVCVLAHHFGHEFNPQVQAAFQKVVAGVASALAHRYH.

The region spanning 2 to 146 is the Globin domain; the sequence is FLSAEEKGLV…VASALAHRYH (145 aa). An N6-succinyllysine modification is found at Lys17. Phosphoserine occurs at positions 44 and 50. An N6-succinyllysine modification is found at Lys59. Residues His63 and His92 each coordinate heme b. Arg104 is subject to Asymmetric dimethylarginine.

This sequence belongs to the globin family. Heterotetramer of two alpha chains and two beta chains. As to expression, red blood cells.

Its function is as follows. Involved in oxygen transport from the lung to the various peripheral tissues. In Panthera pardus saxicolor (Northern Persian leopard), this protein is Hemoglobin subunit beta-2 (HBB2).